Reading from the N-terminus, the 138-residue chain is Large ribosomal subunit protein uL16 (138 aa).

Positions 1–17 (MLQPKRTKFRKQHKGRN) are enriched in basic residues. The tract at residues 1 to 22 (MLQPKRTKFRKQHKGRNRGVAT) is disordered.

The protein belongs to the universal ribosomal protein uL16 family. In terms of assembly, part of the 50S ribosomal subunit.

In terms of biological role, binds 23S rRNA and is also seen to make contacts with the A and possibly P site tRNAs. This Acidithiobacillus ferrooxidans (strain ATCC 23270 / DSM 14882 / CIP 104768 / NCIMB 8455) (Ferrobacillus ferrooxidans (strain ATCC 23270)) protein is Large ribosomal subunit protein uL16.